The following is a 351-amino-acid chain: Porphobilinogen deaminase (351 aa).

S-(dipyrrolylmethanemethyl)cysteine is present on Cys-242. Positions 257–306 (PRHLSKLAYREVLEGNTEALATAAYKSNRTDASTGLTYKLPLEVEFGKVS) constitute an RPE1 insert domain.

Belongs to the HMBS family. As to quaternary structure, monomer. Dipyrromethane serves as cofactor.

The enzyme catalyses 4 porphobilinogen + H2O = hydroxymethylbilane + 4 NH4(+). It functions in the pathway porphyrin-containing compound metabolism; protoporphyrin-IX biosynthesis; coproporphyrinogen-III from 5-aminolevulinate: step 2/4. In terms of biological role, tetrapolymerization of the monopyrrole PBG into the hydroxymethylbilane pre-uroporphyrinogen in several discrete steps. The sequence is that of Porphobilinogen deaminase from Rickettsia conorii (strain ATCC VR-613 / Malish 7).